A 205-amino-acid chain; its full sequence is Large ribosomal subunit protein bL21 (205 aa).

The interval alanine 107–alanine 137 is disordered. Over residues alanine 122–alanine 137 the composition is skewed to low complexity.

Belongs to the bacterial ribosomal protein bL21 family. In terms of assembly, part of the 50S ribosomal subunit. Contacts protein L20.

In terms of biological role, this protein binds to 23S rRNA in the presence of protein L20. This chain is Large ribosomal subunit protein bL21, found in Hyphomonas neptunium (strain ATCC 15444).